A 124-amino-acid chain; its full sequence is MRHYEIVFIVHPDQSEQVPAMIERYKGMVLAAEGKIHRLEDWGRRQLAYPIQKLHKAHYVLMNVECQAETLAEIEHAFKFNDAVLRHLTIKMDRAISDASPMMKDEKAKNLLDAQPAAEVEASA.

This sequence belongs to the bacterial ribosomal protein bS6 family.

Its function is as follows. Binds together with bS18 to 16S ribosomal RNA. The chain is Small ribosomal subunit protein bS6 from Chromobacterium violaceum (strain ATCC 12472 / DSM 30191 / JCM 1249 / CCUG 213 / NBRC 12614 / NCIMB 9131 / NCTC 9757 / MK).